The following is a 584-amino-acid chain: ETHYLENE INSENSITIVE 3-like 1 protein (584 aa).

The stretch at 41–74 forms a coiled coil; that stretch reads YTDDEMDVDELEKRMWRDKMRLKRLKEQQSKCKE. The segment covering 67–80 has biased composition (basic and acidic residues); the sequence is EQQSKCKEGVDGSK. Disordered regions lie at residues 67–93 and 565–584; these read EQQS…RKKM and EGMG…SIWF.

Belongs to the EIN3 family. Acts as a homodimer to bind the primary ethylene response element.

Its subcellular location is the nucleus. Functionally, probable transcription factor acting as a positive regulator in the ethylene response pathway. Could bind the primary ethylene response element present in the ETHYLENE-RESPONSE-FACTOR1 promoter. The protein is ETHYLENE INSENSITIVE 3-like 1 protein (EIL1) of Arabidopsis thaliana (Mouse-ear cress).